The sequence spans 116 residues: Ribosome-binding factor A (116 aa).

Belongs to the RbfA family. Monomer. Binds 30S ribosomal subunits, but not 50S ribosomal subunits or 70S ribosomes.

The protein resides in the cytoplasm. Functionally, one of several proteins that assist in the late maturation steps of the functional core of the 30S ribosomal subunit. Associates with free 30S ribosomal subunits (but not with 30S subunits that are part of 70S ribosomes or polysomes). Required for efficient processing of 16S rRNA. May interact with the 5'-terminal helix region of 16S rRNA. The chain is Ribosome-binding factor A from Halalkalibacterium halodurans (strain ATCC BAA-125 / DSM 18197 / FERM 7344 / JCM 9153 / C-125) (Bacillus halodurans).